Consider the following 292-residue polypeptide: Nitrogenase iron protein 2 (292 aa).

An ATP-binding site is contributed by G8–S15. C106 is a [4Fe-4S] cluster binding site. At R109 the chain carries ADP-ribosylarginine; by dinitrogenase reductase ADP-ribosyltransferase. C142 is a binding site for [4Fe-4S] cluster.

Belongs to the NifH/BchL/ChlL family. In terms of assembly, homodimer. The cofactor is [4Fe-4S] cluster. In terms of processing, the reversible ADP-ribosylation of Arg-109 inactivates the nitrogenase reductase and regulates nitrogenase activity.

The catalysed reaction is N2 + 8 reduced [2Fe-2S]-[ferredoxin] + 16 ATP + 16 H2O = H2 + 8 oxidized [2Fe-2S]-[ferredoxin] + 2 NH4(+) + 16 ADP + 16 phosphate + 6 H(+). Functionally, the key enzymatic reactions in nitrogen fixation are catalyzed by the nitrogenase complex, which has 2 components: the iron protein and the molybdenum-iron protein. This Methanothermococcus thermolithotrophicus (Methanococcus thermolithotrophicus) protein is Nitrogenase iron protein 2 (nifH2).